A 3685-amino-acid polypeptide reads, in one-letter code: Dystrophin (3685 aa).

The actin-binding stretch occupies residues 1–240 (MLWWEEVEDC…YITSLFQVLP (240 aa)). Calponin-homology (CH) domains are found at residues 15 to 119 (DVQK…LHWQ) and 134 to 240 (TNSE…QVLP). An ANK2- and ANK-3 binding region spans residues 63–72 (PKEKGSTRVH). Spectrin repeat units follow at residues 339 to 447 (VNLD…NLHR), 448 to 556 (VLMD…LLQD), 559 to 667 (LKWQ…QISQ), 719 to 828 (EIRK…WLEY), 830 to 934 (NNII…ELQT), 943 to 1045 (RYQE…KLEE), 1048 to 1154 (NKLR…ALKG), 1157 to 1263 (EKTV…TLEE), 1266 to 1367 (ACWH…LLEQ), 1368 to 1463 (SIQS…LFQK), 1468 to 1568 (EQRL…QLEK), 1571 to 1676 (KLSR…LLLE), 1679 to 1778 (KHME…KASI), 1779 to 1874 (PLKE…KALE), 1877 to 1979 (HQWY…TVRE), 1992 to 2101 (EISY…RFDR), 2104 to 2208 (EKWR…RLEE), 2211 to 2318 (NILS…EIEA), 2319 to 2423 (QIKD…LRAK), 2475 to 2577 (FNRA…QLNE), 2580 to 2686 (KDST…ALEE), 2689 to 2802 (RLLQ…HLEA), 2808 to 2930 (KRLH…RKID), and 2935 to 3040 (RLRE…QLHE). Asn-340 carries the post-translational modification Phosphothreonine. 2 positions are modified to phosphoserine: Tyr-344 and Leu-348. Phosphothreonine is present on residues Glu-519, Ser-616, and Ser-629. Positions 1415–1913 (SDLTSHEISL…PEPRDERKIK (499 aa)) are interaction with SYNM. In terms of domain architecture, WW spans 3055 to 3088 (TSVQGPWERAISPNKVPYYINHETQTTCWDHPKM). The tract at residues 3058 to 3408 (QGPWERAISP…TVLEGDNMET (351 aa)) is interaction with SYNM. The ZZ-type; degenerate zinc-finger motif lies at 3308-3364 (KHQAKCNICKECPIIGFRYRSLKHFNYDICQSCFFSGRVAKGHKMHYPMVEYCTPTT). Residues Cys-3313, Cys-3316, Cys-3337, and Cys-3340 each coordinate Zn(2+). The interval 3466–3518 (DDEHLLIQHYCQSLNQDSPLSQPRSPAQILISLESEERGELERILADLEEENR) is binds to SNTB1. Phosphoserine occurs at positions 3483, 3490, and 3500. Disordered stretches follow at residues 3528–3554 (KQQH…QSPR) and 3603–3685 (EAKV…EDTM). Composition is skewed to polar residues over residues 3607–3626 (NGTT…SSQP) and 3662–3673 (QLNNSFPSSRGR). Residues Ser-3612, Ser-3613, Ser-3617, Ser-3623, Ser-3624, and Ser-3666 each carry the phosphoserine modification.

In terms of assembly, interacts with SYNM. Interacts with the syntrophins SNTA1, SNTB1, SNTB2, SNTG1 and SNTG2. Interacts with KRT19. Component of the dystrophin-associated glycoprotein complex which is composed of three subcomplexes: a cytoplasmic complex comprised of DMD (or UTRN), DTNA and a number of syntrophins, such as SNTB1, SNTB2, SNTG1 and SNTG2, the transmembrane dystroglycan complex, and the sarcoglycan-sarcospan complex. Interacts with DAG1 (betaDAG1) with DMD; the interaction is inhibited by phosphorylation on the PPXY motif of DAG1. Interacts with CMYA5. Directly interacts with ANK2 and ANK3; these interactions do not interfere with betaDAG1-binding and are necessary for proper localization in muscle cells. Identified in a dystroglycan complex that contains at least PRX, DRP2, UTRN, DMD and DAG1. Interacts with DTNB. Interacts with PGM5; the interaction is direct. Interacts with NOS1; localizes NOS1 to sarcolemma in muscle cells. In terms of tissue distribution, expressed in muscle fibers accumulating in the costameres of myoplasm at the sarcolemma. Expressed in brain, muscle, kidney, lung and testis. Most tissues contain transcripts of multiple isoforms. Isoform 15: Only isoform to be detected in heart and liver and is also expressed in brain, testis and hepatoma cells.

The protein localises to the cell membrane. It is found in the sarcolemma. It localises to the cytoplasm. Its subcellular location is the cytoskeleton. The protein resides in the postsynaptic cell membrane. Its function is as follows. Anchors the extracellular matrix to the cytoskeleton via F-actin. Ligand for dystroglycan. Component of the dystrophin-associated glycoprotein complex which accumulates at the neuromuscular junction (NMJ) and at a variety of synapses in the peripheral and central nervous systems and has a structural function in stabilizing the sarcolemma. Also implicated in signaling events and synaptic transmission. The polypeptide is Dystrophin (Homo sapiens (Human)).